We begin with the raw amino-acid sequence, 451 residues long: Protein tweety homolog 1-B (451 aa).

Residues 1 to 43 lie on the Extracellular side of the membrane; it reads MSTSHGYRASWWTYILHQVPHTNFQFEVVDNQFAPQEWSYQQA. The chain crosses the membrane as a helical span at residues 44–64; it reads LLFLASIAGLCLAISLVLICV. The Cytoplasmic segment spans residues 65–86; that stretch reads YLIKFCCCASQEDDDSKSHRVC. Residues 87–107 traverse the membrane as a helical segment; it reads CVTWSCVAAVIICCAGIGIGF. Residues 108-214 are Extracellular-facing; it reads YGNSETNDGV…QVNFIEDYRW (107 aa). Asn128 is a glycosylation site (N-linked (GlcNAc...) asparagine). Residues 215 to 235 form a helical membrane-spanning segment; sequence LAYILLLLLDLIICLFTLLSL. Over 236-240 the chain is Cytoplasmic; that stretch reads AKQIK. Residues 241–261 traverse the membrane as a helical segment; it reads WLVIVMTVVSFFVLLLSWGSM. Over 262–390 the chain is Extracellular; that stretch reads GLEMATAVGL…LKGLCYDGME (129 aa). 2 disulfide bridges follow: Cys275–Cys385 and Cys303–Cys370. Residues Asn284 and Asn355 are each glycosylated (N-linked (GlcNAc...) asparagine). Residues 391–411 traverse the membrane as a helical segment; that stretch reads GILFLLLFSFLSALSFTAAVC. The Cytoplasmic portion of the chain corresponds to 412–451; that stretch reads SLPRAWKRFRNRDLDYDDMDEDDPFNPQESKRFVQWQSSI.

Belongs to the tweety family. Homotetramer; disulfide-linked. Homodimer.

It localises to the cell membrane. The catalysed reaction is chloride(in) = chloride(out). The enzyme catalyses L-glutamate(out) = L-glutamate(in). Its function is as follows. May act as a calcium-independent, swelling-dependent volume-regulated anion channel (VRAC-swell) which plays a pivotal role in the process of regulatory volume decrease (RVD) in the brain through the efflux of anions like chloride and organic osmolytes like glutamate. In Xenopus laevis (African clawed frog), this protein is Protein tweety homolog 1-B (ttyh1-b).